Reading from the N-terminus, the 497-residue chain is Glycerol kinase (497 aa).

Thr-11 contacts ADP. The ATP site is built by Thr-11, Ser-12, and Ser-13. Thr-11 contacts sn-glycerol 3-phosphate. Arg-15 is an ADP binding site. Sn-glycerol 3-phosphate-binding residues include Arg-81, Glu-82, Tyr-133, and Asp-242. Glycerol contacts are provided by Arg-81, Glu-82, Tyr-133, Asp-242, and Gln-243. Residues Thr-264 and Gly-307 each contribute to the ADP site. ATP contacts are provided by Thr-264, Gly-307, Gln-311, and Gly-412. ADP contacts are provided by Gly-412 and Asn-416.

The protein belongs to the FGGY kinase family.

The catalysed reaction is glycerol + ATP = sn-glycerol 3-phosphate + ADP + H(+). It functions in the pathway polyol metabolism; glycerol degradation via glycerol kinase pathway; sn-glycerol 3-phosphate from glycerol: step 1/1. Its activity is regulated as follows. Inhibited by fructose 1,6-bisphosphate (FBP). Key enzyme in the regulation of glycerol uptake and metabolism. Catalyzes the phosphorylation of glycerol to yield sn-glycerol 3-phosphate. The protein is Glycerol kinase of Leptothrix cholodnii (strain ATCC 51168 / LMG 8142 / SP-6) (Leptothrix discophora (strain SP-6)).